The following is a 125-amino-acid chain: Small ribosomal subunit protein uS13 (125 aa).

Residues 93–125 are disordered; sequence RKGLPVRGQRTKTNARTRKGPKRTVAGKKKAGR.

This sequence belongs to the universal ribosomal protein uS13 family. As to quaternary structure, part of the 30S ribosomal subunit. Forms a loose heterodimer with protein S19. Forms two bridges to the 50S subunit in the 70S ribosome.

Its function is as follows. Located at the top of the head of the 30S subunit, it contacts several helices of the 16S rRNA. In the 70S ribosome it contacts the 23S rRNA (bridge B1a) and protein L5 of the 50S subunit (bridge B1b), connecting the 2 subunits; these bridges are implicated in subunit movement. Contacts the tRNAs in the A and P-sites. The chain is Small ribosomal subunit protein uS13 from Paenarthrobacter aurescens (strain TC1).